The following is a 622-amino-acid chain: Transcription factor SKN7 (622 aa).

The span at 1-12 (MSFSTINSNVNK) shows a compositional bias: polar residues. A disordered region spans residues 1–29 (MSFSTINSNVNKTTGDSNNNTTENSSTAD). Low complexity predominate over residues 13-27 (TTGDSNNNTTENSST). The tract at residues 84–190 (ANEFVRKLFR…GLDNIKRKIP (107 aa)) is DNA-binding domain. The segment at 212–303 (TNPNNPSGSL…NNFNTLCSTL (92 aa)) is hydrophobic repeat HR-A/B. A coiled-coil region spans residues 240-260 (FGNLRRRVDKLQKELDMSKME). A Response regulatory domain is found at 378-492 (HVLLVEDDAV…DLHSILIRYL (115 aa)). 4-aspartylphosphate is present on aspartate 427. Disordered stretches follow at residues 501 to 579 (QQLP…QHHN) and 599 to 622 (TVPHSSMGSTPQLPQSTLQENQLS). The segment covering 512 to 527 (THSNTNTANSNPNTIN) has biased composition (low complexity). Polar residues predominate over residues 537–554 (DNPSTTTPVTPGASISSA). Low complexity predominate over residues 555-578 (QHVQQGQQEQQHQIFHAQQQQQHH). The segment covering 600–622 (VPHSSMGSTPQLPQSTLQENQLS) has biased composition (polar residues).

It belongs to the SKN7 family. In terms of assembly, homotrimer. The phosphorelay mechanism involves the sequential transfer of a phosphate group from 'His-576' (H1) to 'Asp-1144' (D1) of SLN1, then to 'His-64' (H2) of YPD1 and finally to Asp-427 (D2) of SKN7.

It is found in the nucleus. Functionally, transcription factor that is part of a SLN1-YPD1-SKN7 two-component regulatory system, which controls gene expression in response to changes in the osmolarity of the extracellular environment. Under low osmotic conditions, phosphorylated and activated by the phosphorelay intermediate protein YPD1. Also activated in response to oxidative stress, independent on the two-component regulatory system. Regulates heat shock genes in response to oxidative stress and genes involved in cell wall integrity in response to osmotic changes. This chain is Transcription factor SKN7 (SKN7), found in Saccharomyces cerevisiae (strain ATCC 204508 / S288c) (Baker's yeast).